A 368-amino-acid chain; its full sequence is Peptide chain release factor 2 (368 aa).

Gln250 is subject to N5-methylglutamine.

The protein belongs to the prokaryotic/mitochondrial release factor family. Methylated by PrmC. Methylation increases the termination efficiency of RF2.

Its subcellular location is the cytoplasm. In terms of biological role, peptide chain release factor 2 directs the termination of translation in response to the peptide chain termination codons UGA and UAA. The chain is Peptide chain release factor 2 from Rickettsia conorii (strain ATCC VR-613 / Malish 7).